The sequence spans 151 residues: UPF0098 protein MTH_273 (151 aa).

This sequence belongs to the UPF0098 family.

This Methanothermobacter thermautotrophicus (strain ATCC 29096 / DSM 1053 / JCM 10044 / NBRC 100330 / Delta H) (Methanobacterium thermoautotrophicum) protein is UPF0098 protein MTH_273.